The sequence spans 584 residues: Eukaryotic translation initiation factor 3 subunit D (584 aa).

Residues 118–184 form a disordered region; sequence IFTRGRGQRG…KDYDKPQRNR (67 aa). The segment covering 127–167 has biased composition (gly residues); it reads GRGGQDTRGGGRQQFQRGGRGGQQYGGGGYSDRGGGRGGGA. Over residues 173-184 the composition is skewed to basic and acidic residues; that stretch reads GWKDYDKPQRNR. The tract at residues 312–326 is RNA gate; it reads ALDMVTVNENAADAP. A disordered region spans residues 563–584; the sequence is PANGLDDDDEGPEPEGVAEEED. Positions 567–584 are enriched in acidic residues; that stretch reads LDDDDEGPEPEGVAEEED.

The protein belongs to the eIF-3 subunit D family. In terms of assembly, component of the eukaryotic translation initiation factor 3 (eIF-3) complex.

It is found in the cytoplasm. Functionally, mRNA cap-binding component of the eukaryotic translation initiation factor 3 (eIF-3) complex, which is involved in protein synthesis of a specialized repertoire of mRNAs and, together with other initiation factors, stimulates binding of mRNA and methionyl-tRNAi to the 40S ribosome. The eIF-3 complex specifically targets and initiates translation of a subset of mRNAs involved in cell proliferation. In the eIF-3 complex, eif3d specifically recognizes and binds the 7-methylguanosine cap of a subset of mRNAs. The polypeptide is Eukaryotic translation initiation factor 3 subunit D (Chaetomium globosum (strain ATCC 6205 / CBS 148.51 / DSM 1962 / NBRC 6347 / NRRL 1970) (Soil fungus)).